Consider the following 240-residue polypeptide: MADS-box protein SVP (240 aa).

The MADS-box domain maps to 3-57 (REKIQIRKIDNATARQVTFSKRRRGLFKKAEELSVLCDADVALIIFSSTGKLFEF). The K-box domain occupies 87–180 (QLVENSDHAR…GTQLTEENER (94 aa)). The tract at residues 202–240 (VYEEGQSSESITNAGNSTGAPVDSESSDTSLRLGLPYGG) is disordered. The span at 206–220 (GQSSESITNAGNSTG) shows a compositional bias: polar residues.

As to quaternary structure, forms a heterodimer with AP1 and SVP. Interacts with the SEU-LUG corepressor complex when complexed to AP1. Interacts with AGL15. Interacts with AGL16. Detected in roots and leaves. Expressed at very low levels in flowers and siliques. Present in floral meristems.

The protein localises to the nucleus. Transcription repressor that inhibit floral transition in the autonomous flowering pathway, independent of photoperiod and temperature. Acts in a dosage-dependent manner. Together with AGL24 and AP1, controls the identity of the floral meristem and regulates expression of class B, C and E genes. Promotes EFM expression to suppress flowering. In Arabidopsis thaliana (Mouse-ear cress), this protein is MADS-box protein SVP.